The following is a 236-amino-acid chain: Large ribosomal subunit protein uL1 (236 aa).

It belongs to the universal ribosomal protein uL1 family. Part of the 50S ribosomal subunit.

Binds directly to 23S rRNA. The L1 stalk is quite mobile in the ribosome, and is involved in E site tRNA release. In terms of biological role, protein L1 is also a translational repressor protein, it controls the translation of the L11 operon by binding to its mRNA. The chain is Large ribosomal subunit protein uL1 from Protochlamydia amoebophila (strain UWE25).